The chain runs to 156 residues: ATP synthase subunit b', chloroplastic (156 aa).

The chain crosses the membrane as a helical span at residues 20–42; sequence NGTLPLMALQFLTLMVLLNTIFY.

This sequence belongs to the ATPase B chain family. In terms of assembly, F-type ATPases have 2 components, F(1) - the catalytic core - and F(0) - the membrane proton channel. F(1) has five subunits: alpha(3), beta(3), gamma(1), delta(1), epsilon(1). F(0) has four main subunits: a(1), b(1), b'(1) and c(10-14). The alpha and beta chains form an alternating ring which encloses part of the gamma chain. F(1) is attached to F(0) by a central stalk formed by the gamma and epsilon chains, while a peripheral stalk is formed by the delta, b and b' chains.

The protein resides in the plastid. It is found in the chloroplast thylakoid membrane. Functionally, f(1)F(0) ATP synthase produces ATP from ADP in the presence of a proton or sodium gradient. F-type ATPases consist of two structural domains, F(1) containing the extramembraneous catalytic core and F(0) containing the membrane proton channel, linked together by a central stalk and a peripheral stalk. During catalysis, ATP synthesis in the catalytic domain of F(1) is coupled via a rotary mechanism of the central stalk subunits to proton translocation. Component of the F(0) channel, it forms part of the peripheral stalk, linking F(1) to F(0). The b'-subunit is a diverged and duplicated form of b found in plants and photosynthetic bacteria. The chain is ATP synthase subunit b', chloroplastic from Pyropia yezoensis (Susabi-nori).